A 398-amino-acid chain; its full sequence is Phosphoglycerate kinase (398 aa).

Substrate-binding positions include 21-23 (DIN), Arg37, 60-63 (HQGR), Arg117, and Arg157. Residues Glu332 and 357–360 (GGDT) contribute to the ATP site.

Belongs to the phosphoglycerate kinase family. As to quaternary structure, monomer.

The protein localises to the cytoplasm. The catalysed reaction is (2R)-3-phosphoglycerate + ATP = (2R)-3-phospho-glyceroyl phosphate + ADP. It participates in carbohydrate degradation; glycolysis; pyruvate from D-glyceraldehyde 3-phosphate: step 2/5. This chain is Phosphoglycerate kinase, found in Halobacterium salinarum (strain ATCC 29341 / DSM 671 / R1).